The chain runs to 461 residues: Kynurenine 3-monooxygenase (461 aa).

FAD-binding positions include 17-18 (LA), 37-39 (ERR), and alanine 56. L-kynurenine is bound by residues arginine 84 and tyrosine 98. FAD contacts are provided by residues arginine 111, leucine 135, aspartate 311, and 324-325 (MN). Residues asparagine 369 and tyrosine 404 each contribute to the L-kynurenine site.

The protein belongs to the aromatic-ring hydroxylase family. KMO subfamily. It depends on FAD as a cofactor.

It catalyses the reaction L-kynurenine + NADPH + O2 + H(+) = 3-hydroxy-L-kynurenine + NADP(+) + H2O. It functions in the pathway cofactor biosynthesis; NAD(+) biosynthesis; quinolinate from L-kynurenine: step 1/3. Its pathway is siderophore biosynthesis; quinolobactin biosynthesis. Functionally, catalyzes the hydroxylation of L-kynurenine (L-Kyn) to form 3-hydroxy-L-kynurenine (L-3OHKyn). Probably required for the synthesis of quinolinic acid and the siderophore quinolobactin. The chain is Kynurenine 3-monooxygenase from Pseudomonas fluorescens.